The chain runs to 707 residues: Elongation factor G (707 aa).

Residues Glu-8–Thr-290 form the tr-type G domain. GTP-binding positions include Ala-17–Thr-24, Asp-88–His-92, and Asn-142–Asp-145.

The protein belongs to the TRAFAC class translation factor GTPase superfamily. Classic translation factor GTPase family. EF-G/EF-2 subfamily.

It localises to the cytoplasm. In terms of biological role, catalyzes the GTP-dependent ribosomal translocation step during translation elongation. During this step, the ribosome changes from the pre-translocational (PRE) to the post-translocational (POST) state as the newly formed A-site-bound peptidyl-tRNA and P-site-bound deacylated tRNA move to the P and E sites, respectively. Catalyzes the coordinated movement of the two tRNA molecules, the mRNA and conformational changes in the ribosome. The chain is Elongation factor G from Idiomarina loihiensis (strain ATCC BAA-735 / DSM 15497 / L2-TR).